The following is a 278-amino-acid chain: Large ribosomal subunit protein uL2 (278 aa).

The segment at 201–278 (HGNINDGKAG…IMRSRHQRKK (78 aa)) is disordered. Over residues 210-221 (GRSRWRGKRPHV) the composition is skewed to basic residues.

Belongs to the universal ribosomal protein uL2 family. In terms of assembly, part of the 50S ribosomal subunit. Forms a bridge to the 30S subunit in the 70S ribosome.

Its function is as follows. One of the primary rRNA binding proteins. Required for association of the 30S and 50S subunits to form the 70S ribosome, for tRNA binding and peptide bond formation. It has been suggested to have peptidyltransferase activity; this is somewhat controversial. Makes several contacts with the 16S rRNA in the 70S ribosome. This is Large ribosomal subunit protein uL2 from Rhizobium meliloti (strain 1021) (Ensifer meliloti).